A 503-amino-acid chain; its full sequence is Aminoaldehyde dehydrogenase 2, peroxisomal (503 aa).

Na(+) contacts are provided by Ile-28 and Asp-99. The NAD(+) site is built by Trp-161 and Lys-185. Residue Leu-189 coordinates Na(+). Residue Ser-239 coordinates NAD(+). The active-site Proton acceptor is the Glu-260. Catalysis depends on Cys-294, which acts as the Nucleophile. Positions 501-503 (AKL) match the Microbody targeting signal motif.

Belongs to the aldehyde dehydrogenase family. In terms of assembly, forms homodimers.

It is found in the peroxisome. The enzyme catalyses 3-aminopropanal + NAD(+) + H2O = beta-alanine + NADH + 2 H(+). It catalyses the reaction 4-aminobutanal + NAD(+) + H2O = 4-aminobutanoate + NADH + 2 H(+). It carries out the reaction 4-guanidinobutanal + NAD(+) + H2O = 4-guanidinobutanoate + NADH + 2 H(+). The protein operates within amine and polyamine biosynthesis; betaine biosynthesis via choline pathway; betaine from betaine aldehyde: step 1/1. In terms of biological role, dehydrogenase that catalyzes the oxidation of several aminoaldehydes. Metabolizes and detoxifies aldehyde products of polyamine degradation to non-toxic amino acids. Catalyzes the oxidation of 3-aminopropanal to beta-alanine. Catalyzes the oxidation of 4-aminobutanal to 4-aminobutanoate. Catalyzes the oxidation of 4-guanidinobutanal to 4-guanidinobutanoate. This is Aminoaldehyde dehydrogenase 2, peroxisomal from Pisum sativum (Garden pea).